We begin with the raw amino-acid sequence, 275 residues long: Formamidopyrimidine-DNA glycosylase (275 aa).

Pro2 functions as the Schiff-base intermediate with DNA in the catalytic mechanism. Glu3 acts as the Proton donor in catalysis. Residue Lys58 is the Proton donor; for beta-elimination activity of the active site. 2 residues coordinate DNA: His91 and Arg110. The segment at 238–272 (QVYGQTGKPCPRCGQAIVKLKVGGRGTHICPKCQK) adopts an FPG-type zinc-finger fold. Arg262 serves as the catalytic Proton donor; for delta-elimination activity.

This sequence belongs to the FPG family. In terms of assembly, monomer. Requires Zn(2+) as cofactor.

It catalyses the reaction Hydrolysis of DNA containing ring-opened 7-methylguanine residues, releasing 2,6-diamino-4-hydroxy-5-(N-methyl)formamidopyrimidine.. The enzyme catalyses 2'-deoxyribonucleotide-(2'-deoxyribose 5'-phosphate)-2'-deoxyribonucleotide-DNA = a 3'-end 2'-deoxyribonucleotide-(2,3-dehydro-2,3-deoxyribose 5'-phosphate)-DNA + a 5'-end 5'-phospho-2'-deoxyribonucleoside-DNA + H(+). Involved in base excision repair of DNA damaged by oxidation or by mutagenic agents. Acts as a DNA glycosylase that recognizes and removes damaged bases. Has a preference for oxidized purines, such as 7,8-dihydro-8-oxoguanine (8-oxoG). Has AP (apurinic/apyrimidinic) lyase activity and introduces nicks in the DNA strand. Cleaves the DNA backbone by beta-delta elimination to generate a single-strand break at the site of the removed base with both 3'- and 5'-phosphates. This Streptococcus pyogenes serotype M28 (strain MGAS6180) protein is Formamidopyrimidine-DNA glycosylase.